The primary structure comprises 248 residues: 3-deoxy-manno-octulosonate cytidylyltransferase (248 aa).

Belongs to the KdsB family.

It localises to the cytoplasm. It catalyses the reaction 3-deoxy-alpha-D-manno-oct-2-ulosonate + CTP = CMP-3-deoxy-beta-D-manno-octulosonate + diphosphate. The protein operates within nucleotide-sugar biosynthesis; CMP-3-deoxy-D-manno-octulosonate biosynthesis; CMP-3-deoxy-D-manno-octulosonate from 3-deoxy-D-manno-octulosonate and CTP: step 1/1. It functions in the pathway bacterial outer membrane biogenesis; lipopolysaccharide biosynthesis. Its function is as follows. Activates KDO (a required 8-carbon sugar) for incorporation into bacterial lipopolysaccharide in Gram-negative bacteria. This is 3-deoxy-manno-octulosonate cytidylyltransferase from Klebsiella pneumoniae (strain 342).